The sequence spans 240 residues: Small ribosomal subunit protein uS3 (240 aa).

A KH type-2 domain is found at 39–109; that stretch reads IRQYIEKTLN…QIRVNVIEVP (71 aa). The interval 219 to 240 is disordered; that stretch reads APPSQPRRKSRRQQFDDRSQDG. The span at 231–240 shows a compositional bias: basic and acidic residues; sequence QQFDDRSQDG.

The protein belongs to the universal ribosomal protein uS3 family. Part of the 30S ribosomal subunit. Forms a tight complex with proteins S10 and S14.

In terms of biological role, binds the lower part of the 30S subunit head. Binds mRNA in the 70S ribosome, positioning it for translation. The polypeptide is Small ribosomal subunit protein uS3 (Synechocystis sp. (strain ATCC 27184 / PCC 6803 / Kazusa)).